Consider the following 329-residue polypeptide: Cytosolic arginine sensor for mTORC1 subunit 2 (329 aa).

ACT domains lie at 72–140 (ADAT…HTLS) and 262–322 (ELWK…HALK).

The protein belongs to the GATS family. As to quaternary structure, forms homodimers and heterodimers with CASTOR1. Interacts with the GATOR2 complex which is composed of MIOS, SEC13, SEH1L, WDR24 and WDR59; the interaction is not regulated by arginine.

It is found in the cytoplasm. The protein localises to the cytosol. Its function is as follows. Functions as a negative regulator of the TORC1 signaling pathway through the GATOR complex. As part of homodimers or heterodimers with CASTOR1, directly binds and inhibits the GATOR subcomplex GATOR2 and thereby mTORC1. Does not directly bind arginine, but binding of arginine to CASTOR1 disrupts the interaction of CASTOR2-containing heterodimers with GATOR2 which can in turn activate mTORC1 and the TORC1 signaling pathway. The polypeptide is Cytosolic arginine sensor for mTORC1 subunit 2 (Mus musculus (Mouse)).